The following is a 209-amino-acid chain: MMQEQQPQSTEKRGWLSLRLWSVAGISIALLSACFIVSCVVTYHFTYGETGKRLSELHSYHSSLTCFSEGTKVPAWGCCPASWKSFGSSCYFISSEEKVWSKSEQNCVEMGAHLVVFNTEAEQNFIVQQLNESFSYFLGLSDPQGNNNWQWIDKTPYEKNVRFWHLGEPNHSAEQCASIVFWKPTGWGWNDVICETRRNSICEMNKIYL.

Topologically, residues 1–20 (MMQEQQPQSTEKRGWLSLRL) are cytoplasmic. Residues 21 to 41 (WSVAGISIALLSACFIVSCVV) form a helical; Signal-anchor for type II membrane protein membrane-spanning segment. The Extracellular portion of the chain corresponds to 42–209 (TYHFTYGETG…SICEMNKIYL (168 aa)). 4 disulfide bridges follow: cysteine 66–cysteine 78, cysteine 79–cysteine 90, cysteine 107–cysteine 202, and cysteine 176–cysteine 194. In terms of domain architecture, C-type lectin spans 86–203 (FGSSCYFISS…CETRRNSICE (118 aa)). Ca(2+)-binding residues include valine 116, asparagine 118, and glutamate 122. An N-linked (GlcNAc...) asparagine glycan is attached at asparagine 131. Positions 168, 170, and 174 each coordinate Ca(2+). Alpha-D-mannopyranose-binding positions include 168 to 170 (EPN), glutamate 174, tryptophan 182, 190 to 191 (ND), and arginine 198. N-linked (GlcNAc...) asparagine glycosylation occurs at asparagine 170. Ca(2+) contacts are provided by asparagine 190 and aspartate 191. Position 203 (glutamate 203) interacts with Ca(2+).

Associated with FCER1G. Heterodimer with CLEC4D; this heterodimer forms a pattern recognition receptor (PRR) against fungal infection. In terms of tissue distribution, expressed in lung, spleen, lymph node, leukocytes, bone marrow, tonsils and dendritic cells. Strongly expressed in purified monocytes and weakly in B-cells. In peripheral blood cells, preferentially expressed in plasmacytoids rather than myeloids.

It localises to the cell membrane. Functionally, calcium-dependent lectin that acts as a pattern recognition receptor (PRR) of the innate immune system: specifically recognizes and binds alpha-mannans on C.albicans hypheas. Binding of C.albicans alpha-mannans to this receptor complex leads to phosphorylation of the immunoreceptor tyrosine-based activation motif (ITAM) of FCER1G, triggering activation of SYK, CARD9 and NF-kappa-B, consequently driving maturation of antigen-presenting cells and shaping antigen-specific priming of T-cells toward effector T-helper 1 and T-helper 17 cell subtypes. Recognizes also, in a mannose-dependent manner, allergens from house dust mite and fungi, by promoting cysteinyl leukotriene production. Recognizes soluble elements from the eggs of Shistosoma mansoni altering adaptive immune responses. This Homo sapiens (Human) protein is C-type lectin domain family 6 member A.